The following is a 276-amino-acid chain: Diaminopimelate epimerase (276 aa).

The substrate site is built by Asn13, Gln46, and Asn66. Cys75 acts as the Proton donor in catalysis. Substrate is bound by residues 76-77 (GN), Asn159, Asn192, and 210-211 (ER). Residue Cys219 is the Proton acceptor of the active site. 220–221 (GS) lines the substrate pocket.

This sequence belongs to the diaminopimelate epimerase family. Homodimer.

It localises to the cytoplasm. The enzyme catalyses (2S,6S)-2,6-diaminopimelate = meso-2,6-diaminopimelate. It participates in amino-acid biosynthesis; L-lysine biosynthesis via DAP pathway; DL-2,6-diaminopimelate from LL-2,6-diaminopimelate: step 1/1. In terms of biological role, catalyzes the stereoinversion of LL-2,6-diaminopimelate (L,L-DAP) to meso-diaminopimelate (meso-DAP), a precursor of L-lysine and an essential component of the bacterial peptidoglycan. The polypeptide is Diaminopimelate epimerase (Colwellia psychrerythraea (strain 34H / ATCC BAA-681) (Vibrio psychroerythus)).